The sequence spans 543 residues: MAKEIKFGEEARRSLEKGVNQLADTVKVTLGPKGRNVVLDKKFGSPLITNDGVTIAKEVELEDKFENMGAQLVKEVATKTNDVAGDGTTTATLLAQAIIREGMKNVAAGANPMILKKGLQKAVDTAVAGIKENSRKVKGKEDIARVATISANEELIGTLIADAMEKVTNDGVITVEESKTMGTNLEVVEGMQFDRGYLSAYMVTDTDKMEAVLDDPYILITDKKLTNIQDLLPILEEIVKQGKKLLIIAEDIEGEALTTLILNKLRGTFVCVAVKAPGFGDRRKAMLQDIAILTGGEVITEELGLDLKETQITQLGKARQVIVQKENTIIVDGNGSAEDIKSRINSIKTQIEDTTSDFDREKLQERLAKLSGGVAVIQVGAATETEMKEKKLRIEDALAATRAAVEEGIVAGGGTAFINVIPEVAKLLESTSGDEKTGVQIILRALEEPVRQIAENAGLEGSVIVEKIKTSEKGMGFDALNEKYIDMIEGGIVDPAKVTRSALQNAVSVAAMVLTTESVVADKPEPEAPAVPAGMPGGMGGMY.

Residues 29 to 32 (TLGP), 86 to 90 (DGTTT), glycine 413, 478 to 480 (DAL), and aspartate 494 each bind ATP. The disordered stretch occupies residues 524 to 543 (PEPEAPAVPAGMPGGMGGMY).

This sequence belongs to the chaperonin (HSP60) family. Forms a cylinder of 14 subunits composed of two heptameric rings stacked back-to-back. Interacts with the co-chaperonin GroES.

The protein resides in the cytoplasm. The enzyme catalyses ATP + H2O + a folded polypeptide = ADP + phosphate + an unfolded polypeptide.. Its function is as follows. Together with its co-chaperonin GroES, plays an essential role in assisting protein folding. The GroEL-GroES system forms a nano-cage that allows encapsulation of the non-native substrate proteins and provides a physical environment optimized to promote and accelerate protein folding. This Ruminiclostridium cellulolyticum (strain ATCC 35319 / DSM 5812 / JCM 6584 / H10) (Clostridium cellulolyticum) protein is Chaperonin GroEL.